We begin with the raw amino-acid sequence, 610 residues long: ESX-5 secretion system protein EccA5 (610 aa).

Residue 357–364 (GPPGTGKT) participates in ATP binding.

The protein belongs to the CbxX/CfxQ family. As to quaternary structure, part of the ESX-5 / type VII secretion system (T7SS), which is composed of cytosolic and membrane components.

The protein resides in the cytoplasm. Functionally, part of the ESX-5 specialized secretion system, which is responsible for the secretion of EsxN and a number of PE_PGRS and PPE proteins. EccA5 exhibits ATPase activity and may provide energy for the export of ESX-5 substrates. The polypeptide is ESX-5 secretion system protein EccA5 (Mycobacterium marinum (strain ATCC BAA-535 / M)).